A 168-amino-acid polypeptide reads, in one-letter code: Phosphopantetheine adenylyltransferase (168 aa).

Threonine 13 is a substrate binding site. ATP-binding positions include 13-14 (TF) and histidine 21. Substrate-binding residues include lysine 45, leucine 78, and arginine 92. ATP contacts are provided by residues 93–95 (GLR), glutamate 103, and 128–134 (TQFISSG).

It belongs to the bacterial CoaD family. In terms of assembly, homohexamer. Mg(2+) serves as cofactor.

The protein resides in the cytoplasm. It catalyses the reaction (R)-4'-phosphopantetheine + ATP + H(+) = 3'-dephospho-CoA + diphosphate. The protein operates within cofactor biosynthesis; coenzyme A biosynthesis; CoA from (R)-pantothenate: step 4/5. Its function is as follows. Reversibly transfers an adenylyl group from ATP to 4'-phosphopantetheine, yielding dephospho-CoA (dPCoA) and pyrophosphate. This is Phosphopantetheine adenylyltransferase from Wolbachia sp. subsp. Drosophila simulans (strain wRi).